The sequence spans 192 residues: GTP-binding protein RHO2 (192 aa).

14–21 (GDGACGKT) is a binding site for GTP. The Effector region signature appears at 36–44 (YHPTVFENY). GTP contacts are provided by residues 61–65 (DTAGQ) and 119–122 (LKKD). A lipid anchor (S-palmitoyl cysteine) is attached at C188. C189 is subject to Cysteine methyl ester. C189 carries the S-geranylgeranyl cysteine lipid modification. Residues 190–192 (IIL) constitute a propeptide, removed in mature form.

The protein belongs to the small GTPase superfamily. Rho family. In terms of assembly, interacts with BEM4.

It is found in the cell membrane. The catalysed reaction is GTP + H2O = GDP + phosphate + H(+). The sequence is that of GTP-binding protein RHO2 (RHO2) from Saccharomyces cerevisiae (strain ATCC 204508 / S288c) (Baker's yeast).